We begin with the raw amino-acid sequence, 140 residues long: FK506-binding protein 2 (140 aa).

The first 19 residues, 1–19 (MKFTTGLSVLLFFVLQVFA), serve as a signal peptide directing secretion. A PPIase FKBP-type domain is found at 43 to 132 (GDVVSVHYTG…IFETELVDIQ (90 aa)).

Belongs to the FKBP-type PPIase family. FKBP2 subfamily.

It is found in the endoplasmic reticulum. It carries out the reaction [protein]-peptidylproline (omega=180) = [protein]-peptidylproline (omega=0). Inhibited by both FK506 and rapamycin. PPIases accelerate the folding of proteins. It catalyzes the cis-trans isomerization of proline imidic peptide bonds in oligopeptides. The protein is FK506-binding protein 2 (FPR2) of Kluyveromyces lactis (strain ATCC 8585 / CBS 2359 / DSM 70799 / NBRC 1267 / NRRL Y-1140 / WM37) (Yeast).